The chain runs to 485 residues: NADH-quinone oxidoreductase subunit N (485 aa).

Transmembrane regions (helical) follow at residues 8–28, 35–55, 71–91, 105–125, 127–147, 159–179, 203–223, 235–255, 271–291, 297–317, 326–346, 373–393, 408–430, and 450–470; these read LIAL…MLSI, FLNA…LWFV, GFAM…CTFA, FYLL…ANHL, SLFL…GYAF, YTIL…LVYA, LLAG…LVPF, PAPV…GVVM, VVLA…ALSQ, LLGY…IALQ, VGVY…VVSL, AAVM…LGFI, WWLV…RVAV, and YSAG…LGVW.

It belongs to the complex I subunit 2 family. As to quaternary structure, NDH-1 is composed of 13 different subunits. Subunits NuoA, H, J, K, L, M, N constitute the membrane sector of the complex.

The protein localises to the cell inner membrane. The catalysed reaction is a quinone + NADH + 5 H(+)(in) = a quinol + NAD(+) + 4 H(+)(out). In terms of biological role, NDH-1 shuttles electrons from NADH, via FMN and iron-sulfur (Fe-S) centers, to quinones in the respiratory chain. The immediate electron acceptor for the enzyme in this species is believed to be ubiquinone. Couples the redox reaction to proton translocation (for every two electrons transferred, four hydrogen ions are translocated across the cytoplasmic membrane), and thus conserves the redox energy in a proton gradient. This chain is NADH-quinone oxidoreductase subunit N, found in Shigella boydii serotype 4 (strain Sb227).